Consider the following 278-residue polypeptide: MAIYAIGDVQGCYAELRRLLELIRFDPAKDRLLFTGDLVNRGPQSLETLRFIRGLGPAAATVLGNHDLHLLAVACGVSRVKHKDTFGDVLEAADRDELLAWLRTRPLVHREGSYCLVHAGIPPAWNAETAMARAGEVETVLAAGDITGFCRQMYGDKPDLWSDDLAGWDRLRFITNALTRMRYCDRTGRLDFRQKGAPGRQPASLVPWFDVPDRVPPGATIVFGHWSTLGYFAGKDCYCLDTGCLWGGELTALKLDGTLERYAVPSLHGGYQKPTLAK.

The protein belongs to the Ap4A hydrolase family.

The enzyme catalyses P(1),P(4)-bis(5'-adenosyl) tetraphosphate + H2O = 2 ADP + 2 H(+). Hydrolyzes diadenosine 5',5'''-P1,P4-tetraphosphate to yield ADP. The polypeptide is Bis(5'-nucleosyl)-tetraphosphatase, symmetrical (Methylococcus capsulatus (strain ATCC 33009 / NCIMB 11132 / Bath)).